The sequence spans 113 residues: UPF0482 protein YnfB (113 aa).

An N-terminal signal peptide occupies residues 1-28; it reads MKITLSKRIGLLAILLPCALALSTTVHA.

It belongs to the UPF0482 family.

This chain is UPF0482 protein YnfB, found in Escherichia coli O8 (strain IAI1).